We begin with the raw amino-acid sequence, 595 residues long: Merlin (595 aa).

A Phosphoserine modification is found at Ser-13. Positions 22 to 311 constitute an FERM domain; the sequence is FTVRIVTMDA…GNHDLFMRRR (290 aa). Ser-518 is modified (phosphoserine; by PAK).

Interacts with NHERF1, HGS and AGAP2. Interacts with LAYN. Interacts with SGSM3. Interacts (via FERM domain) with MPP1. Interacts with WWC1. Interacts with the CUL4A-RBX1-DDB1-VprBP/DCAF1 E3 ubiquitin-protein ligase complex. The unphosphorylated form interacts (via FERM domain) with VPRBP/DCAF1. Interacts (via FERM domain) with NOP53; the interaction is direct. Interacts with SCHIP1; the interaction is direct. In terms of processing, phosphorylation of Ser-518 inhibits nuclear localization by disrupting the intramolecular association of the FERM domain with the C-terminal tail. The dephosphorylation of Ser-518 favors the interaction with NOP53. Post-translationally, ubiquitinated by the CUL4A-RBX1-DDB1-DCAF1/VprBP E3 ubiquitin-protein ligase complex for ubiquitination and subsequent proteasome-dependent degradation. Widely expressed. Isoform 1 and isoform 3 are predominant. Isoform 4, isoform 5 and isoform 6 are expressed moderately. Isoform 8 is found at low frequency. Isoform 7, isoform 9 and isoform 10 are not expressed in adult tissues, with the exception of adult retina expressing isoform 10. Isoform 9 is faintly expressed in fetal brain, heart, lung, skeletal muscle and spleen. Fetal thymus expresses isoforms 1, 7, 9 and 10 at similar levels.

It is found in the cell projection. Its subcellular location is the filopodium membrane. The protein resides in the ruffle membrane. The protein localises to the nucleus. It localises to the cytoplasm. It is found in the perinuclear region. Its subcellular location is the cytoplasmic granule. The protein resides in the cytoskeleton. Functionally, probable regulator of the Hippo/SWH (Sav/Wts/Hpo) signaling pathway, a signaling pathway that plays a pivotal role in tumor suppression by restricting proliferation and promoting apoptosis. Along with WWC1 can synergistically induce the phosphorylation of LATS1 and LATS2 and can probably function in the regulation of the Hippo/SWH (Sav/Wts/Hpo) signaling pathway. May act as a membrane stabilizing protein. May inhibit PI3 kinase by binding to AGAP2 and impairing its stimulating activity. Suppresses cell proliferation and tumorigenesis by inhibiting the CUL4A-RBX1-DDB1-VprBP/DCAF1 E3 ubiquitin-protein ligase complex. The sequence is that of Merlin (NF2) from Homo sapiens (Human).